A 162-amino-acid polypeptide reads, in one-letter code: Heat shock protein beta-6 (162 aa).

Residues 1-72 (MEIPVPVQPS…PTAQVSTDSG (72 aa)) are involved in stabilization of the HSPB1:HSBP6 heterodimer. A Phosphoserine modification is found at Ser-16. The sHSP domain occupies 56 to 162 (RAPSVALPTA…AQLPSPPAAK (107 aa)). Gln-66 bears the Deamidated glutamine mark. Residue Ser-157 is modified to Phosphoserine.

The protein belongs to the small heat shock protein (HSP20) family. As to quaternary structure, homodimer. Small heat shock proteins form high molecular mass oligomers containing variable number of monomers; these oligomers display a very flexible quaternary structure easily exchanging their subunits. Heterooligomer with HSPB1; formed through oligomerization of HSPB1:HSBP6 dimers; subunit exchange leads to formation of at least two different heterooligomeric complexes, differing in variable quantities of HSPB1 and HSPB6 homodimers in addition to HSPB1:HSPB6 heterodimers. Heterooligomer with CRYAB; large heterooligomers consist of CRYAB homodimers and HSPB5:HSPB6 heterodimers but lacking HSPB6 homodimers. Interacts with BAG3. Interacts (phosphorylated) with YWHAZ. Interacts with PDE4A and PDE4D; required for maintenance of the non-phosphorylated state of HSPB6 under basal conditions. Interacts with KDR. Interacts with PRKD1. Phosphorylated at Ser-16 by PKA and probably PKD1K; required to protect cardiomyocytes from apoptosis.

Its subcellular location is the cytoplasm. It is found in the nucleus. It localises to the secreted. In terms of biological role, small heat shock protein which functions as a molecular chaperone probably maintaining denatured proteins in a folding-competent state. Seems to have versatile functions in various biological processes. Plays a role in regulating muscle function such as smooth muscle vasorelaxation and cardiac myocyte contractility. May regulate myocardial angiogenesis implicating KDR. Overexpression mediates cardioprotection and angiogenesis after induced damage. Stabilizes monomeric YWHAZ thereby supporting YWHAZ chaperone-like activity. The polypeptide is Heat shock protein beta-6 (Hspb6) (Mus musculus (Mouse)).